The primary structure comprises 436 residues: MCIVFSPRETVSELDRFIIGQNDAKRSVAIALRNRWRRQQLDEPMREEVMPKNILMIGPTGVGKTGIARRLAKLSGAPFVKVEATKFTEVGYVGRDVEQIIRDLVEIAVSLVREKKRDEIKEKAHMNAEERVLDALVGKTASPATRDSFRKKLREGELDEKEIEIEVADNNSNSASTFDIPGMPGAQMGIMNLSDILGKMGNRTKVRKTTVRDAFKPLIDDESEKLLDQEQIIQEALRVAENDGIVFIDEIDKIATKDGGASAAVSREGVQRDLLPLVEGTTIATKYGQIKTDHILFIASGAFHVSKPSDLLPELQGRLPIRVELNPLTREDLRRILTEPEASLIKQYIALMATEEVHLEITDDAIDALADIAVDLNARIENIGARRLQTVMERVLDEISFTAPDKAGTSFKIDAAYVRKSIGELAADIDLSRFIL.

Residues Ile-19, 61 to 65, Asp-249, Glu-314, and Arg-386 contribute to the ATP site; that span reads GVGKT.

This sequence belongs to the ClpX chaperone family. HslU subfamily. In terms of assembly, a double ring-shaped homohexamer of HslV is capped on each side by a ring-shaped HslU homohexamer. The assembly of the HslU/HslV complex is dependent on binding of ATP.

It is found in the cytoplasm. ATPase subunit of a proteasome-like degradation complex; this subunit has chaperone activity. The binding of ATP and its subsequent hydrolysis by HslU are essential for unfolding of protein substrates subsequently hydrolyzed by HslV. HslU recognizes the N-terminal part of its protein substrates and unfolds these before they are guided to HslV for hydrolysis. This is ATP-dependent protease ATPase subunit HslU from Bartonella tribocorum (strain CIP 105476 / IBS 506).